A 317-amino-acid polypeptide reads, in one-letter code: Protein CbxX, chromosomal (317 aa).

The interval 1 to 21 (MSAPETTAPLQPPAAPAASLP) is disordered. Position 85–92 (85–92 (GNPGTGKT)) interacts with ATP.

Belongs to the CbxX/CfxQ family.

Seems to be necessary for the expression of RuBisCO. The polypeptide is Protein CbxX, chromosomal (cbxXC) (Cupriavidus necator (strain ATCC 17699 / DSM 428 / KCTC 22496 / NCIMB 10442 / H16 / Stanier 337) (Ralstonia eutropha)).